A 280-amino-acid polypeptide reads, in one-letter code: F420-dependent methylenetetrahydromethanopterin dehydrogenase (280 aa).

Belongs to the MTD family.

It catalyses the reaction 5,10-methylenetetrahydromethanopterin + oxidized coenzyme F420-(gamma-L-Glu)(n) + 2 H(+) = 5,10-methenyl-5,6,7,8-tetrahydromethanopterin + reduced coenzyme F420-(gamma-L-Glu)(n). It participates in one-carbon metabolism; methanogenesis from CO(2); 5,10-methylene-5,6,7,8-tetrahydromethanopterin from 5,10-methenyl-5,6,7,8-tetrahydromethanopterin (coenzyme F420 route): step 1/1. Its function is as follows. Catalyzes the reversible reduction of methenyl-H(4)MPT(+) to methylene-H(4)MPT. The protein is F420-dependent methylenetetrahydromethanopterin dehydrogenase of Methanospirillum hungatei JF-1 (strain ATCC 27890 / DSM 864 / NBRC 100397 / JF-1).